A 363-amino-acid chain; its full sequence is Biotin synthase (363 aa).

Residues 38–266 (NTVQVSTLLS…ETQVRLSAGR (229 aa)) form the Radical SAM core domain. [4Fe-4S] cluster is bound by residues Cys-53, Cys-57, and Cys-60. [2Fe-2S] cluster contacts are provided by Cys-97, Cys-129, Cys-189, and Arg-261. The disordered stretch occupies residues 315–363 (KAFEKKSQPESVAAEKSKYQSQGEKPRWSRPEHKIDRNLEAQQNAKTKA). Positions 316-353 (AFEKKSQPESVAAEKSKYQSQGEKPRWSRPEHKIDRNL) are enriched in basic and acidic residues. A compositionally biased stretch (polar residues) spans 354 to 363 (EAQQNAKTKA).

Belongs to the radical SAM superfamily. Biotin synthase family. In terms of assembly, homodimer. [4Fe-4S] cluster serves as cofactor. [2Fe-2S] cluster is required as a cofactor.

It carries out the reaction (4R,5S)-dethiobiotin + (sulfur carrier)-SH + 2 reduced [2Fe-2S]-[ferredoxin] + 2 S-adenosyl-L-methionine = (sulfur carrier)-H + biotin + 2 5'-deoxyadenosine + 2 L-methionine + 2 oxidized [2Fe-2S]-[ferredoxin]. It functions in the pathway cofactor biosynthesis; biotin biosynthesis; biotin from 7,8-diaminononanoate: step 2/2. Its function is as follows. Catalyzes the conversion of dethiobiotin (DTB) to biotin by the insertion of a sulfur atom into dethiobiotin via a radical-based mechanism. In Christiangramia forsetii (strain DSM 17595 / CGMCC 1.15422 / KT0803) (Gramella forsetii), this protein is Biotin synthase.